A 215-amino-acid chain; its full sequence is Transmembrane protein 267 (215 aa).

Helical transmembrane passes span 77-97 (FGEV…HFFQ), 114-134 (FLHC…AVHL), and 178-198 (SSFY…LMYL).

The protein resides in the membrane. This Mus musculus (Mouse) protein is Transmembrane protein 267.